A 482-amino-acid chain; its full sequence is BTB/POZ domain and ankyrin repeat-containing protein NOOT1 (482 aa).

In terms of domain architecture, BTB spans 25–107 (SDVVFSVEGR…LYSGQVSIVP (83 aa)). The C2HC NPR-type zinc-finger motif lies at 113-127 (RPNCGDRGCWHTHCT). The Zn(2+) site is built by Cys-116, Cys-121, His-123, and Cys-126. ANK repeat units lie at residues 249-278 (QKIR…LNLD), 279-308 (EALA…DVNF), 313-342 (TGKT…DPNV), and 346-380 (DGVT…KLRL). The tract at residues 395–434 (EEGNNNNSNNNNNATASSATNMYPHHNMNEDHHHSHNNNN) is disordered. The segment covering 398 to 415 (NNNNSNNNNNATASSATN) has biased composition (low complexity).

The protein belongs to the plant 'ANKYRIN-BTB/POZ' family. 'NOOT-BOP-COCH-like' (NBCL) subfamily. In terms of assembly, homodimer. In terms of tissue distribution, expressed in the shoot apical meristem (SAM) at the base of the developing leaf where stipules are formed. Associated with functional and vestigial abscission zones (AZs), including pulvini.

It is found in the nucleus. The protein localises to the cytoplasm. The protein resides in the cell membrane. It participates in protein modification; protein ubiquitination. In terms of biological role, may act as a substrate-specific adapter of an E3 ubiquitin-protein ligase complex (CUL3-RBX1-BTB) which mediates the ubiquitination and subsequent proteasomal degradation of target proteins. Transcriptional co-regulator involved in the promotion of leaf and floral meristem fate and determinacy. Promotes normal stipule growth and development. Required for the abscission of senescent organs, probably by regulating the cell wall disorganization in abscission zones (AZs, e.g. pulvini at the base of leaves). Involved in the coordination of the symbiotic nodule developmental program. Promotes the formation of root nodules by interacting directly with APP1 to modulate the expression of the nuclear transcription factor Y subunit (NF-YA1), a key nodulin. Necessary for the robust maintenance of nodule identity throughout the nodule developmental program. Involved in the regulation of indeterminate nodule identity in association with NOOT2. In Medicago truncatula (Barrel medic), this protein is BTB/POZ domain and ankyrin repeat-containing protein NOOT1.